Here is a 111-residue protein sequence, read N- to C-terminus: MIGIVLVLASLLSVGGQLCQKQATRPLTTGGRRRHLMLWLGLALICMGAAMVLWLLVLQTLPVGIAYPMLSLNFVWVTLAAWKIWHEQVLPRHWLGVALIISGIIILGSAA.

The next 3 membrane-spanning stretches (helical) occupy residues 38 to 58 (LWLG…LLVL), 61 to 81 (LPVG…TLAA), and 89 to 109 (VLPR…ILGS). The EamA domain maps to 40–109 (LGLALICMGA…IISGIIILGS (70 aa)).

This sequence belongs to the ArnE family. Heterodimer of ArnE and ArnF.

Its subcellular location is the cell inner membrane. The protein operates within bacterial outer membrane biogenesis; lipopolysaccharide biosynthesis. Translocates 4-amino-4-deoxy-L-arabinose-phosphoundecaprenol (alpha-L-Ara4N-phosphoundecaprenol) from the cytoplasmic to the periplasmic side of the inner membrane. The polypeptide is Probable 4-amino-4-deoxy-L-arabinose-phosphoundecaprenol flippase subunit ArnE (Salmonella paratyphi A (strain ATCC 9150 / SARB42)).